The following is a 467-amino-acid chain: ATP-dependent protease ATPase subunit HslU (467 aa).

ATP is bound by residues Ile-20, Gly-62 to Glu-67, Asp-280, Glu-345, and Arg-417.

The protein belongs to the ClpX chaperone family. HslU subfamily. As to quaternary structure, a double ring-shaped homohexamer of HslV is capped on each side by a ring-shaped HslU homohexamer. The assembly of the HslU/HslV complex is dependent on binding of ATP.

It localises to the cytoplasm. In terms of biological role, ATPase subunit of a proteasome-like degradation complex; this subunit has chaperone activity. The binding of ATP and its subsequent hydrolysis by HslU are essential for unfolding of protein substrates subsequently hydrolyzed by HslV. HslU recognizes the N-terminal part of its protein substrates and unfolds these before they are guided to HslV for hydrolysis. The chain is ATP-dependent protease ATPase subunit HslU from Ligilactobacillus salivarius (strain UCC118) (Lactobacillus salivarius).